Consider the following 341-residue polypeptide: NADH-ubiquinone oxidoreductase chain 1 (341 aa).

10 consecutive transmembrane segments (helical) span residues 2–22 (IINI…VAYL), 39–59 (PNFV…KLLL), 71–91 (IILV…WVVI), 104–124 (LGIL…LLSG), 141–161 (AQLI…IMFV), 175–195 (VVWY…ASVA), 212–230 (VAGY…FFLA), 243–263 (GYLL…NILF), 276–296 (LINS…FIWV), and 308–328 (LINF…LIIP).

Belongs to the complex I subunit 1 family. As to quaternary structure, complex I is composed of 37 different subunits.

Its subcellular location is the mitochondrion inner membrane. It carries out the reaction a ubiquinone + NADH + 5 H(+)(in) = a ubiquinol + NAD(+) + 4 H(+)(out). Its function is as follows. Core subunit of the mitochondrial membrane respiratory chain NADH dehydrogenase (Complex I) that is believed to belong to the minimal assembly required for catalysis. Complex I functions in the transfer of electrons from NADH to the respiratory chain. The immediate electron acceptor for the enzyme is believed to be ubiquinone. This is NADH-ubiquinone oxidoreductase chain 1 (ND1) from Yarrowia lipolytica (strain CLIB 122 / E 150) (Yeast).